Here is a 341-residue protein sequence, read N- to C-terminus: Putative UPF0607 protein ENSP00000383144 (341 aa).

Disordered regions lie at residues 70-131 (RLPK…NPRP) and 218-279 (LMVG…PPAK). The span at 72 to 101 (PKTEVRAEEPKEATEVKDQVETQEQEDNKR) shows a compositional bias: basic and acidic residues. A compositionally biased stretch (polar residues) spans 108–127 (EAASTSRPLETQGNLTSSWY). The segment covering 243-252 (AGHRSHKRKL) has biased composition (basic residues).

It belongs to the UPF0607 family.

This chain is Putative UPF0607 protein ENSP00000383144, found in Homo sapiens (Human).